We begin with the raw amino-acid sequence, 648 residues long: Bifunctional protein TilS/HprT (648 aa).

ATP is bound at residue 29-34; sequence SGGPDS. A Mg(2+)-binding site is contributed by Asp627.

In the N-terminal section; belongs to the tRNA(Ile)-lysidine synthase family. This sequence in the C-terminal section; belongs to the purine/pyrimidine phosphoribosyltransferase family. Requires Mg(2+) as cofactor.

Its subcellular location is the cytoplasm. It carries out the reaction IMP + diphosphate = hypoxanthine + 5-phospho-alpha-D-ribose 1-diphosphate. It catalyses the reaction GMP + diphosphate = guanine + 5-phospho-alpha-D-ribose 1-diphosphate. The catalysed reaction is cytidine(34) in tRNA(Ile2) + L-lysine + ATP = lysidine(34) in tRNA(Ile2) + AMP + diphosphate + H(+). In terms of biological role, ligates lysine onto the cytidine present at position 34 of the AUA codon-specific tRNA(Ile) that contains the anticodon CAU, in an ATP-dependent manner. Cytidine is converted to lysidine, thus changing the amino acid specificity of the tRNA from methionine to isoleucine. The protein is Bifunctional protein TilS/HprT (tilS/hprT) of Listeria monocytogenes serotype 4b (strain F2365).